The chain runs to 75 residues: Conotoxin VnMSGL-0111 (75 aa).

An N-terminal signal peptide occupies residues 1-20; sequence MSGLEIMVLTLLLLVSMATS. A propeptide spanning residues 21–44 is cleaved from the precursor; the sequence is HQDGGEKQATQRDAINVRRRSITR. 3 cysteine pairs are disulfide-bonded: Cys48/Cys60, Cys52/Cys69, and Cys59/Cys73.

This sequence belongs to the conotoxin O3 superfamily. Expressed by the venom duct.

The protein localises to the secreted. The polypeptide is Conotoxin VnMSGL-0111 (Conus ventricosus (Mediterranean cone)).